The sequence spans 86 residues: Large ribosomal subunit protein bL31B (86 aa).

This sequence belongs to the bacterial ribosomal protein bL31 family. Type B subfamily. Part of the 50S ribosomal subunit.

The sequence is that of Large ribosomal subunit protein bL31B from Streptococcus agalactiae serotype Ia (strain ATCC 27591 / A909 / CDC SS700).